The following is a 388-amino-acid chain: Chorismate synthase (388 aa).

Arg39 and Arg45 together coordinate NADP(+). Residues 130–132, 251–252, Ala296, 311–315, and Arg337 contribute to the FMN site; these read RSS, NA, and KPIPT.

It belongs to the chorismate synthase family. In terms of assembly, homotetramer. FMNH2 serves as cofactor.

It catalyses the reaction 5-O-(1-carboxyvinyl)-3-phosphoshikimate = chorismate + phosphate. It functions in the pathway metabolic intermediate biosynthesis; chorismate biosynthesis; chorismate from D-erythrose 4-phosphate and phosphoenolpyruvate: step 7/7. Catalyzes the anti-1,4-elimination of the C-3 phosphate and the C-6 proR hydrogen from 5-enolpyruvylshikimate-3-phosphate (EPSP) to yield chorismate, which is the branch point compound that serves as the starting substrate for the three terminal pathways of aromatic amino acid biosynthesis. This reaction introduces a second double bond into the aromatic ring system. The chain is Chorismate synthase from Streptococcus equi subsp. zooepidemicus (strain H70).